A 586-amino-acid chain; its full sequence is Thioredoxin domain-containing protein 3 (586 aa).

The Thioredoxin domain maps to Leu-10–Glu-116. Residues Cys-39 and Cys-42 are joined by a disulfide bond. 3 NDK regions span residues Met-157 to Glu-254, Val-312 to Ala-452, and Leu-453 to Asn-586.

It in the C-terminal section; belongs to the NDK family. As to quaternary structure, monomer. As to expression, testis-specific. Expressed mainly in round spermatids.

The protein localises to the cytoplasm. Its function is as follows. Probably required during the final stages of sperm tail maturation in the testis and/or epididymis, where extensive disulfide bonding of fibrous sheath (FS) proteins occurs. In vitro, it has neither nucleoside diphosphate kinase (NDPK) activity nor reducing activity on disulfide bonds. Exhibits a 3'-5' exonuclease activity with a preference for single-stranded DNA, suggesting roles in DNA proofreading and repair. The protein is Thioredoxin domain-containing protein 3 (Nme8) of Mus musculus (Mouse).